The primary structure comprises 185 residues: Jasmonate-induced protein homolog (185 aa).

This sequence belongs to the jasmonate-induced protein family.

This Atriplex canescens (Fourwing saltbush) protein is Jasmonate-induced protein homolog.